Here is a 460-residue protein sequence, read N- to C-terminus: Argininosuccinate lyase (460 aa).

It belongs to the lyase 1 family. Argininosuccinate lyase subfamily.

Its subcellular location is the cytoplasm. The catalysed reaction is 2-(N(omega)-L-arginino)succinate = fumarate + L-arginine. It functions in the pathway amino-acid biosynthesis; L-arginine biosynthesis; L-arginine from L-ornithine and carbamoyl phosphate: step 3/3. This is Argininosuccinate lyase from Campylobacter jejuni subsp. doylei (strain ATCC BAA-1458 / RM4099 / 269.97).